The primary structure comprises 1616 residues: DNA (cytosine-5)-methyltransferase 1 (1616 aa).

The interval 1 to 120 (MPARTAPARV…NQARSEARRV (120 aa)) is interaction with DMAP1. The segment at 1–148 (MPARTAPARV…RRSKSDGEAK (148 aa)) is interaction with DNMT3A. Interaction with the PRC2/EED-EZH2 complex regions lie at residues 1–336 (MPAR…TEKK) and 308–606 (NPQI…TIRH). The region spanning 16–109 (PAISLPDDVR…NREVNGRLEN (94 aa)) is the DMAP1-binding domain. The residue at position 70 (Lys70) is an N6,N6-dimethyllysine. The tract at residues 103-349 (VNGRLENGNQ…AKTVMNSKTH (247 aa)) is disordered. 2 positions are modified to phosphoserine: Ser127 and Ser133. Thr137 carries the post-translational modification Phosphothreonine. A Phosphoserine modification is found at Ser141. Lys142 is subject to N6-methyllysine; by SETD7. A Phosphoserine; by PKB/AKT1 modification is found at Ser143. An interaction with DNMT3B region spans residues 149–217 (PEPSPSPRIT…TSRERVARPL (69 aa)). Residues Ser152 and Ser154 each carry the phosphoserine modification. Position 160 is an N6-acetyllysine (Lys160). The interaction with PCNA stretch occupies residues 163–174 (RQTTITSHFAKG). Residue Thr166 is modified to Phosphothreonine. Lys173 and Lys188 each carry N6-acetyllysine. The Nuclear localization signal motif lies at 177 to 205 (KRKPQEESERAKSDESIKEEDKDQDEKRR). 3 stretches are compositionally biased toward basic and acidic residues: residues 179–214 (KPQEESERAKSDESIKEEDKDQDEKRRRVTSRERVA), 221–267 (EPER…REAR), and 281–306 (KDEKKHRSQPKDLAAKRRPEEKEPEK). The residue at position 259 (Lys259) is an N6-acetyllysine; alternate. A Glycyl lysine isopeptide (Lys-Gly) (interchain with G-Cter in SUMO2); alternate cross-link involves residue Lys259. The homodimerization stretch occupies residues 310-502 (QISDEKDEDE…PEYAPIFGLM (193 aa)). Ser312 carries the post-translational modification Phosphoserine. The span at 321–337 (EEKRRKTTPKEPTEKKM) shows a compositional bias: basic and acidic residues. The DNA replication foci-targeting sequence stretch occupies residues 331-550 (EPTEKKMARA…NLNRFTEDSL (220 aa)). Positions 353 and 356 each coordinate Zn(2+). The residue at position 366 (Lys366) is an N6-acetyllysine. Residues Ser394 and Ser398 each carry the phosphoserine modification. 2 residues coordinate Zn(2+): Cys414 and His418. Ser509 and Ser549 each carry phosphoserine. The segment at 646–692 (NAFKRRRCGVCEVCQQPECGKCKACKDMVKFGGSGRSKQACQERRCP) adopts a CXXC-type zinc-finger fold. Residues 651-697 (RRCGVCEVCQQPECGKCKACKDMVKFGGSGRSKQACQERRCPNMAMK) are required for activity. Residues Cys653, Cys656, Cys659, Cys664, Cys667, Cys670, Cys686, and Cys691 each contribute to the Zn(2+) site. The interval 693–754 (NMAMKEADDD…SYYKKVCIDA (62 aa)) is autoinhibitory linker. The span at 699-709 (ADDDEEVDDNI) shows a compositional bias: acidic residues. Residues 699-729 (ADDDEEVDDNIPEMPSPKKMHQGKKKKQNKN) form a disordered region. A Phosphoserine modification is found at Ser714. Positions 716–728 (KKMHQGKKKKQNK) are enriched in basic residues. At Ser732 the chain carries Phosphoserine. Lys749 is subject to N6-acetyllysine. The BAH 1 domain maps to 755–880 (ETLEVGDCVS…QDYARFESPP (126 aa)). Ser878 carries the phosphoserine modification. N6-acetyllysine is present on residues Lys891, Lys957, Lys961, Lys975, and Lys1054. The BAH 2 domain maps to 972–1100 (HYRKYSDYIK…AKSKSFEDPP (129 aa)). Residues 1095 to 1130 (SFEDPPNHARSPGNKGKGKGKGKGKPKSQACEPSEP) are disordered. Tandem repeats lie at residues 1109 to 1110 (KG), 1111 to 1112 (KG), 1113 to 1114 (KG), 1115 to 1116 (KG), and 1117 to 1118 (KG). The interval 1109-1120 (KGKGKGKGKGKP) is 6 X 2 AA tandem repeats of K-G. Residues 1110–1120 (GKGKGKGKGKP) show a composition bias toward basic residues. Residues Lys1111, Lys1113, and Lys1115 each carry the N6-acetyllysine modification. Lys1117 carries the N6-acetyllysine; by EHMT2 modification. An N6-acetyllysine mark is found at Lys1119 and Lys1121. One copy of the 6; approximate repeat lies at 1119 to 1120 (KP). The segment at 1121–1616 (KSQACEPSEP…KIKEEEAAKD (496 aa)) is interaction with the PRC2/EED-EZH2 complex. The region spanning 1139–1599 (LRTLDVFSGC…LEIKLCMLAK (461 aa)) is the SAM-dependent MTase C5-type domain. The tract at residues 1139–1616 (LRTLDVFSGC…KIKEEEAAKD (478 aa)) is catalytic. S-adenosyl-L-methionine is bound by residues Ser1146, 1150 to 1151 (GL), 1168 to 1169 (EM), 1190 to 1191 (DC), and Cys1191. The active site involves Cys1226. N6-acetyllysine occurs at positions 1349 and 1415. Asn1578 and Val1580 together coordinate S-adenosyl-L-methionine. A Glycyl lysine isopeptide (Lys-Gly) (interchain with G-Cter in SUMO2) cross-link involves residue Lys1609.

The protein belongs to the class I-like SAM-binding methyltransferase superfamily. C5-methyltransferase family. As to quaternary structure, homodimer. Forms a stable complex with E2F1, BB1 and HDAC1. Forms a complex with DMAP1 and HDAC2, with direct interaction. Interacts with the PRC2/EED-EZH2 complex. Probably part of a corepressor complex containing ZNF304, TRIM28, SETDB1 and DNMT1. Interacts with UHRF1; promoting its recruitment to hemimethylated DNA. Interacts with USP7, promoting its deubiquitination. Interacts with PCNA. Interacts with MBD2 and MBD3. Interacts with DNMT3A and DNMT3B. Interacts with UBC9. Interacts with CSNK1D. Interacts with HDAC1. Interacts with BAZ2A/TIP5. Interacts with SIRT7. Interacts with ZNF263; recruited to the SIX3 promoter along with other proteins involved in chromatin modification and transcriptional corepression where it contributes to transcriptional repression. Interacts with L3MBTL3 and DCAF5; the interaction requires DNMT1 methylation at Lys-142 and is necessary to target DNMT1 for ubiquitination by the CRL4-DCAF5 E3 ubiquitin ligase complex and proteasomal degradation. Interacts with PHF20L1; the interaction requires DNMT1 methylation at Lys-142 and protects DNMT1 from ubiquitination and proteasomal degradation. Sumoylated; sumoylation increases activity. Post-translationally, acetylation on multiple lysines, mainly by KAT2B/PCAF, regulates cell cycle G(2)/M transition. Deacetylation of Lys-1349 and Lys-1415 by SIRT1 increases methyltransferase activity. In terms of processing, phosphorylation of Ser-154 by CDKs is important for enzymatic activity and protein stability. Phosphorylation of Ser-143 by AKT1 prevents methylation by SETD7 thereby increasing DNMT1 stability. Methylation at Lys-142 by SETD7 is necessary for the regulation of DNMT1 proteasomal degradation. Post-translationally, ubiquitinated by UHRF1; interaction with USP7 counteracts ubiquitination by UHRF1 by promoting deubiquitination and preventing degradation by the proteasome. Ubiquitous; highly expressed in fetal tissues, heart, kidney, placenta, peripheral blood mononuclear cells, and expressed at lower levels in spleen, lung, brain, small intestine, colon, liver, and skeletal muscle. Isoform 2 is less expressed than isoform 1.

The protein localises to the nucleus. The enzyme catalyses a 2'-deoxycytidine in DNA + S-adenosyl-L-methionine = a 5-methyl-2'-deoxycytidine in DNA + S-adenosyl-L-homocysteine + H(+). Methylates CpG residues. Preferentially methylates hemimethylated DNA. Associates with DNA replication sites in S phase maintaining the methylation pattern in the newly synthesized strand, that is essential for epigenetic inheritance. Associates with chromatin during G2 and M phases to maintain DNA methylation independently of replication. It is responsible for maintaining methylation patterns established in development. DNA methylation is coordinated with methylation of histones. Mediates transcriptional repression by direct binding to HDAC2. In association with DNMT3B and via the recruitment of CTCFL/BORIS, involved in activation of BAG1 gene expression by modulating dimethylation of promoter histone H3 at H3K4 and H3K9. Probably forms a corepressor complex required for activated KRAS-mediated promoter hypermethylation and transcriptional silencing of tumor suppressor genes (TSGs) or other tumor-related genes in colorectal cancer (CRC) cells. Also required to maintain a transcriptionally repressive state of genes in undifferentiated embryonic stem cells (ESCs). Associates at promoter regions of tumor suppressor genes (TSGs) leading to their gene silencing. Promotes tumor growth. The polypeptide is DNA (cytosine-5)-methyltransferase 1 (DNMT1) (Homo sapiens (Human)).